The primary structure comprises 149 residues: Large ribosomal subunit protein uL15 (149 aa).

The interval 1-54 is disordered; sequence MSLKLHNLKPTPNSRPEKHRKGRGHAAGKGKQAGKGQSGQNKRKGHRLGFEGGQ. Residues 17-28 are compositionally biased toward basic residues; sequence EKHRKGRGHAAG.

Belongs to the universal ribosomal protein uL15 family. Part of the 50S ribosomal subunit.

Binds to the 23S rRNA. The polypeptide is Large ribosomal subunit protein uL15 (Mycoplasmopsis synoviae (strain 53) (Mycoplasma synoviae)).